A 305-amino-acid chain; its full sequence is Homeobox protein NANOGP8 (305 aa).

Positions 1-96 are disordered; it reads MSVDPACPQS…KEDKVPVKKQ (96 aa). Residues 65–82 show a composition bias toward polar residues; it reads SPDSSTSPKGKQPTSAEN. The segment at residues 95 to 154 is a DNA-binding region (homeobox); that stretch reads KQKTRTVFSSTQLCVLNDRFQRQKYLSLQQMQELSNILNLSYKQVKTWFQNQRMKSKRWQ. Tandem repeats lie at residues 196-200, 201-205, 206-210, 216-220, 221-225, 226-230, 231-235, and 236-240. The segment at 196–240 is 8 X repeats starting with a Trp in each unit; the sequence is WSNQTWNNSTWSNQTQNIQSWSNHSWNTQTWCTQSWNNQAWNSPF. The interval 196–240 is sufficient for transactivation activity; the sequence is WSNQTWNNSTWSNQTQNIQSWSNHSWNTQTWCTQSWNNQAWNSPF. Residues 241-305 are sufficient for strong transactivation activity; it reads YNCGEESLQS…YSMNMQPEDV (65 aa).

This sequence belongs to the Nanog homeobox family.

The protein resides in the nucleus. Its function is as follows. May act as a transcription regulator. When overexpressed, promotes entry of cells into S phase and cell proliferation. This is Homeobox protein NANOGP8 (NANOGP8) from Homo sapiens (Human).